The following is a 511-amino-acid chain: Probable G-protein coupled receptor 152 (511 aa).

Residues 1–20 (MDTAVEANLGAAGHGPRTEL) are disordered. Residues 1 to 33 (MDTAVEANLGAAGHGPRTELSDEDYYPQGSWDT) lie on the Extracellular side of the membrane. Residues 34–54 (VFLVALLLLGLPANGLMAWLA) traverse the membrane as a helical segment. The Cytoplasmic segment spans residues 55–65 (GSQARHGAGTR). Residues 66–86 (LALLLLSLALSDFLFLAAATF) form a helical membrane-spanning segment. The Extracellular portion of the chain corresponds to 87 to 105 (QILEIQHGGHWPLGTAACR). An intrachain disulfide couples Cys-104 to Cys-182. The helical transmembrane segment at 106–126 (FYYFLWGVSYSSGLFLLTALS) threads the bilayer. At 127 to 148 (LDRCLLALCPRWYPGHRPARLP) the chain is on the cytoplasmic side. Residues 149 to 169 (LWVCAGVWVLATLFSVPWLVF) form a helical membrane-spanning segment. The Extracellular portion of the chain corresponds to 170–194 (PEAAVWWYDLVICLDFWDTEELPLR). The chain crosses the membrane as a helical span at residues 195-215 (MLEILGGFLPFLLLLVCHVLT). Over 216 to 258 (QATACRTCCGHQPRRMACHGFARVAKTILSAYVVLRLPYQLAQ) the chain is Cytoplasmic. Residues 259–279 (LLYLAFLWDVYPGYLLWEALV) form a helical membrane-spanning segment. Residues 280 to 282 (YSD) lie on the Extracellular side of the membrane. A helical transmembrane segment spans residues 283 to 303 (YLILLNSCLSPFLCLAASADL). Residues 304 to 511 (RALLRTVLSS…PEEAPSAGPT (208 aa)) lie on the Cytoplasmic side of the membrane. 3 disordered regions span residues 328–349 (PAEPQTLPGPTSEGQSRLDSVV), 361–386 (SDSVVQPEVSPSAQPQSDSVAQPTVG), and 407–511 (PQLD…AGPT). 2 stretches are compositionally biased toward polar residues: residues 335-345 (PGPTSEGQSRL) and 369-386 (VSPSAQPQSDSVAQPTVG). The span at 419–433 (PSAQPQSKSVVQPQV) shows a compositional bias: low complexity. Composition is skewed to polar residues over residues 435 to 453 (PLTQPQLDPVAQPQSNTET) and 462 to 473 (SASNPGEENSSG).

It belongs to the G-protein coupled receptor 1 family.

The protein localises to the cell membrane. Its function is as follows. Orphan receptor. The chain is Probable G-protein coupled receptor 152 (Gpr152) from Mus musculus (Mouse).